The primary structure comprises 190 residues: MTYEIQASVREAQGTGASRRLRREGQIPGILYGEGQEPVAIAVDHKTVFYALEKESFHTALIKLSLNGETKDVIVRDFQMHPFRREVQHIDFQAVKADQLVRIRVPLHIVNAENSQAVKLQGGRVSLLNTAVEVLALPANIPAFLDLDCAEVVAGDILHLSDIKLPEGVESVSLKRNENLAVATVTGKKR.

Belongs to the bacterial ribosomal protein bL25 family. CTC subfamily. Part of the 50S ribosomal subunit; part of the 5S rRNA/L5/L18/L25 subcomplex. Contacts the 5S rRNA. Binds to the 5S rRNA independently of L5 and L18.

In terms of biological role, this is one of the proteins that binds to the 5S RNA in the ribosome where it forms part of the central protuberance. The sequence is that of Large ribosomal subunit protein bL25 from Neisseria gonorrhoeae (strain ATCC 700825 / FA 1090).